The chain runs to 415 residues: Serine hydroxymethyltransferase (415 aa).

Residues L117 and 121–123 contribute to the (6S)-5,6,7,8-tetrahydrofolate site; that span reads GHL. N6-(pyridoxal phosphate)lysine is present on K226. Position 241 (E241) interacts with (6S)-5,6,7,8-tetrahydrofolate.

This sequence belongs to the SHMT family. In terms of assembly, homodimer. Pyridoxal 5'-phosphate serves as cofactor.

The protein resides in the cytoplasm. It carries out the reaction (6R)-5,10-methylene-5,6,7,8-tetrahydrofolate + glycine + H2O = (6S)-5,6,7,8-tetrahydrofolate + L-serine. It functions in the pathway one-carbon metabolism; tetrahydrofolate interconversion. The protein operates within amino-acid biosynthesis; glycine biosynthesis; glycine from L-serine: step 1/1. In terms of biological role, catalyzes the reversible interconversion of serine and glycine with tetrahydrofolate (THF) serving as the one-carbon carrier. This reaction serves as the major source of one-carbon groups required for the biosynthesis of purines, thymidylate, methionine, and other important biomolecules. Also exhibits THF-independent aldolase activity toward beta-hydroxyamino acids, producing glycine and aldehydes, via a retro-aldol mechanism. The protein is Serine hydroxymethyltransferase of Bacillus pumilus (strain SAFR-032).